The following is a 670-amino-acid chain: Segment polarity protein dishevelled homolog DVL-1 (670 aa).

The 85-residue stretch at 1-85 (MAETKIIYHM…RVVSWLVLAE (85 aa)) folds into the DIX domain. The interval 89–237 (SDAGSQGTDS…LRQADRASSF (149 aa)) is disordered. The span at 142-151 (SHRRERARRR) shows a compositional bias: basic residues. The segment covering 152–171 (NREEAARTNGHPRGDRRRDV) has biased composition (basic and acidic residues). A compositionally biased stretch (low complexity) spans 176–192 (DSASTALSSELESSSFV). Residue Ser194 is modified to Phosphoserine. Residues 200–214 (TSRLSSSTEQSTSSR) show a composition bias toward low complexity. Basic residues predominate over residues 215–228 (LIRKHKRRRRKQRL). The 73-residue stretch at 251 to 323 (TVTLNMERHH…NDDAVRVLRE (73 aa)) folds into the PDZ domain. Positions 400 to 474 (PDSGLEIRDR…SEQCYYVFGD (75 aa)) constitute a DEP domain. The interval 518–642 (PGPPPCFPPA…PGGPPVRELA (125 aa)) is disordered. Residues 526–555 (PAYQDPGFSYGSGSTGSQQSEGSKSSGSTR) show a composition bias toward low complexity. Over residues 600–611 (SRGSSPRSQASA) the composition is skewed to polar residues.

This sequence belongs to the DSH family. Interacts with CXXC4. Interacts (via PDZ domain) with NXN. Interacts with BRD7 and INVS. Interacts (via PDZ domain) with VANGL1 and VANGL2 (via C-terminus). Interacts with ARRB1; the interaction is enhanced by phosphorylation of DVL1. Interacts with CYLD. Interacts (via PDZ domain) with RYK. Self-associates (via DIX domain) and forms higher homooligomers. Interacts (via PDZ domain) with DACT1 and FZD7, where DACT1 and FZD7 compete for the same binding site. Interacts (via DEP domain) with MUSK; the interaction is direct and mediates the formation a DVL1, MUSK and PAK1 ternary complex involved in AChR clustering. Interacts (via PDZ domain) with TMEM88. Interacts with DCDC2. Interacts with FOXK2. Interacts with PKD1 (via extracellular domain). Interacts (via PDZ domain) with CCDC88C/DAPLE; competes with CCDC88C for binding to frizzled receptor FZD7 and dissociates from CCDC88C following initiation of non-canonical Wnt signaling when CCDC88C displaces DVL1 from ligand-activated FZD7. Ubiquitinated; undergoes both 'Lys-48'-linked ubiquitination, leading to its subsequent degradation by the ubiquitin-proteasome pathway, and 'Lys-63'-linked ubiquitination. The interaction with INVS is required for ubiquitination. Deubiquitinated by CYLD, which acts on 'Lys-63'-linked ubiquitin chains.

Its subcellular location is the cell membrane. It localises to the cytoplasm. The protein localises to the cytosol. The protein resides in the cytoplasmic vesicle. Functionally, participates in Wnt signaling by binding to the cytoplasmic C-terminus of frizzled family members and transducing the Wnt signal to down-stream effectors. Plays a role both in canonical and non-canonical Wnt signaling. Plays a role in the signal transduction pathways mediated by multiple Wnt genes. Required for LEF1 activation upon WNT1 and WNT3A signaling. DVL1 and PAK1 form a ternary complex with MUSK which is important for MUSK-dependent regulation of AChR clustering during the formation of the neuromuscular junction (NMJ). The polypeptide is Segment polarity protein dishevelled homolog DVL-1 (DVL1) (Pan troglodytes (Chimpanzee)).